Reading from the N-terminus, the 342-residue chain is S-adenosylmethionine:tRNA ribosyltransferase-isomerase (342 aa).

Belongs to the QueA family. Monomer.

Its subcellular location is the cytoplasm. It catalyses the reaction 7-aminomethyl-7-carbaguanosine(34) in tRNA + S-adenosyl-L-methionine = epoxyqueuosine(34) in tRNA + adenine + L-methionine + 2 H(+). The protein operates within tRNA modification; tRNA-queuosine biosynthesis. Functionally, transfers and isomerizes the ribose moiety from AdoMet to the 7-aminomethyl group of 7-deazaguanine (preQ1-tRNA) to give epoxyqueuosine (oQ-tRNA). The polypeptide is S-adenosylmethionine:tRNA ribosyltransferase-isomerase (Listeria monocytogenes serotype 4a (strain HCC23)).